Reading from the N-terminus, the 513-residue chain is ATP synthase subunit alpha (513 aa).

172 to 179 serves as a coordination point for ATP; it reads GDRQTGKT.

This sequence belongs to the ATPase alpha/beta chains family. In terms of assembly, F-type ATPases have 2 components, CF(1) - the catalytic core - and CF(0) - the membrane proton channel. CF(1) has five subunits: alpha(3), beta(3), gamma(1), delta(1), epsilon(1). CF(0) has three main subunits: a(1), b(2) and c(9-12). The alpha and beta chains form an alternating ring which encloses part of the gamma chain. CF(1) is attached to CF(0) by a central stalk formed by the gamma and epsilon chains, while a peripheral stalk is formed by the delta and b chains.

It is found in the cell inner membrane. The enzyme catalyses ATP + H2O + 4 H(+)(in) = ADP + phosphate + 5 H(+)(out). Produces ATP from ADP in the presence of a proton gradient across the membrane. The alpha chain is a regulatory subunit. The protein is ATP synthase subunit alpha of Gluconacetobacter diazotrophicus (strain ATCC 49037 / DSM 5601 / CCUG 37298 / CIP 103539 / LMG 7603 / PAl5).